The primary structure comprises 154 residues: Aspartate carbamoyltransferase regulatory chain (154 aa).

Zn(2+) contacts are provided by Cys109, Cys114, Cys138, and Cys141.

It belongs to the PyrI family. As to quaternary structure, contains catalytic and regulatory chains. Zn(2+) serves as cofactor.

Involved in allosteric regulation of aspartate carbamoyltransferase. This chain is Aspartate carbamoyltransferase regulatory chain, found in Sodalis glossinidius (strain morsitans).